The sequence spans 279 residues: Oxygen-dependent coproporphyrinogen-III oxidase (279 aa).

Ser-102 lines the substrate pocket. His-106 and His-116 together coordinate a divalent metal cation. His-116 acts as the Proton donor in catalysis. 118–120 (NTR) is a substrate binding site. A divalent metal cation is bound by residues His-149 and His-179. Positions 244–279 (YVEFNLLYDRGTKFGLMTDGNVEAILMSLPPVVKFN) are important for dimerization.

This sequence belongs to the aerobic coproporphyrinogen-III oxidase family. In terms of assembly, homodimer. It depends on a divalent metal cation as a cofactor.

It localises to the cytoplasm. The catalysed reaction is coproporphyrinogen III + O2 + 2 H(+) = protoporphyrinogen IX + 2 CO2 + 2 H2O. It functions in the pathway porphyrin-containing compound metabolism; protoporphyrin-IX biosynthesis; protoporphyrinogen-IX from coproporphyrinogen-III (O2 route): step 1/1. Involved in the heme biosynthesis. Catalyzes the aerobic oxidative decarboxylation of propionate groups of rings A and B of coproporphyrinogen-III to yield the vinyl groups in protoporphyrinogen-IX. The chain is Oxygen-dependent coproporphyrinogen-III oxidase from Rickettsia prowazekii (strain Madrid E).